A 392-amino-acid chain; its full sequence is Galactokinase (392 aa).

Residues arginine 37, glutamate 43, histidine 44, and aspartate 46 each contribute to the alpha-D-galactose site. Residues glycine 136, glycine 138, serine 140, and serine 141 each coordinate ATP. Position 186 (aspartate 186) interacts with alpha-D-galactose. Aspartate 186 acts as the Proton acceptor in catalysis. Serine 230 is subject to Phosphoserine. Alpha-D-galactose is bound at residue tyrosine 236.

It belongs to the GHMP kinase family. GalK subfamily. In terms of assembly, homodimer.

The catalysed reaction is alpha-D-galactose + ATP = alpha-D-galactose 1-phosphate + ADP + H(+). It functions in the pathway carbohydrate metabolism; galactose metabolism. In terms of biological role, catalyzes the transfer of a phosphate from ATP to alpha-D-galactose and participates in the first committed step in the catabolism of galactose. This Homo sapiens (Human) protein is Galactokinase.